The sequence spans 134 residues: Cytochrome c-type biogenesis protein CcmE (134 aa).

The Cytoplasmic portion of the chain corresponds to Met1–Arg7. Residues Leu8–Lys28 traverse the membrane as a helical; Signal-anchor for type II membrane protein segment. Residues Leu29–Leu134 lie on the Periplasmic side of the membrane. His120 and Tyr124 together coordinate heme.

Belongs to the CcmE/CycJ family.

Its subcellular location is the cell inner membrane. In terms of biological role, heme chaperone required for the biogenesis of c-type cytochromes. Transiently binds heme delivered by CcmC and transfers the heme to apo-cytochromes in a process facilitated by CcmF and CcmH. This chain is Cytochrome c-type biogenesis protein CcmE, found in Ehrlichia ruminantium (strain Gardel).